Reading from the N-terminus, the 433-residue chain is Putative wall-associated receptor kinase-like 16 (433 aa).

A signal peptide spans 1–22 (MKLQHVVYLVAIFFVVAIFVIA). Residues 23 to 29 (CIEENKY) are Extracellular-facing. A helical transmembrane segment spans residues 30–50 (LVWIMIILANTTNILSLVRSI). Topologically, residues 51–433 (SYIKNIRKHQ…VARFDIEAGR (383 aa)) are cytoplasmic. The residue at position 97 (T97) is a Phosphothreonine. A Protein kinase domain is found at 108–391 (YDVSRILGQG…RAKTTKHNWL (284 aa)). ATP-binding positions include 114-122 (LGQGGQWTV) and K136. Phosphotyrosine is present on Y181. Residue D233 is the Proton acceptor of the active site. Residues T267 and T272 each carry the phosphothreonine modification. Y280 bears the Phosphotyrosine mark.

The protein belongs to the protein kinase superfamily. Ser/Thr protein kinase family.

It localises to the membrane. The catalysed reaction is L-seryl-[protein] + ATP = O-phospho-L-seryl-[protein] + ADP + H(+). The enzyme catalyses L-threonyl-[protein] + ATP = O-phospho-L-threonyl-[protein] + ADP + H(+). In terms of biological role, putative serine/threonine-protein kinase that may function as a signaling receptor of extracellular matrix component. The sequence is that of Putative wall-associated receptor kinase-like 16 (WAKL16) from Arabidopsis thaliana (Mouse-ear cress).